The chain runs to 449 residues: Polyadenylation factor subunit 2 (449 aa).

7 WD repeats span residues 77-116, 119-158, 161-200, 203-242, 245-285, 288-328, and 337-376; these read KVKH…FESI, AHDS…VKVL, AHTE…QERV, GHHW…NVST, GLKH…RELQ, RDDM…SNST, and AHEK…DPNA. A disordered region spans residues 411 to 432; it reads LPPANETNLGTPQPSILGSESI. The segment covering 415–432 has biased composition (polar residues); it reads NETNLGTPQPSILGSESI.

The protein localises to the nucleus. Required for 3'-end cleavage and polyadenylation of pre-mRNAs. Also involved in chromosome segregation where it has a role in chromosome attachment to the mitotic spindle. The chain is Polyadenylation factor subunit 2 (PSF2) from Eremothecium gossypii (strain ATCC 10895 / CBS 109.51 / FGSC 9923 / NRRL Y-1056) (Yeast).